Reading from the N-terminus, the 451-residue chain is Probable plasmid replicative DNA helicase (451 aa).

The 258-residue stretch at 194–451 folds into the SF4 helicase domain; sequence QNSFFDAFPT…SKFSAIKKVW (258 aa). 225–232 lines the ATP pocket; the sequence is ARPSIGKT.

This sequence belongs to the helicase family. DnaB subfamily. As to quaternary structure, homohexamer.

The enzyme catalyses Couples ATP hydrolysis with the unwinding of duplex DNA at the replication fork by translocating in the 5'-3' direction. This creates two antiparallel DNA single strands (ssDNA). The leading ssDNA polymer is the template for DNA polymerase III holoenzyme which synthesizes a continuous strand.. It catalyses the reaction ATP + H2O = ADP + phosphate + H(+). Functionally, a replicative DNA helicase, it participates in initiation and elongation during DNA replication. Travels ahead of the DNA replisome, separating dsDNA into templates for DNA synthesis. A processive ATP-dependent 5'-3' DNA helicase it has DNA-dependent ATPase activity. Its function is as follows. The plasmid this protein is encoded on is thought to be required for growth within mammalian cells. In Chlamydia trachomatis serovar L2 (strain ATCC VR-902B / DSM 19102 / 434/Bu), this protein is Probable plasmid replicative DNA helicase.